Consider the following 541-residue polypeptide: Phosphoenolpyruvate carboxykinase (ATP) (541 aa).

Residues R67, Y207, and K213 each coordinate substrate. ATP is bound by residues K213, H232, and 248-256 (GLSGTGKTT). Positions 213 and 232 each coordinate Mn(2+). Residue D269 coordinates Mn(2+). ATP-binding positions include E297, R333, 449–450 (RI), and T455. R333 lines the substrate pocket.

This sequence belongs to the phosphoenolpyruvate carboxykinase (ATP) family. As to quaternary structure, monomer. It depends on Mn(2+) as a cofactor.

It is found in the cytoplasm. The enzyme catalyses oxaloacetate + ATP = phosphoenolpyruvate + ADP + CO2. Its pathway is carbohydrate biosynthesis; gluconeogenesis. Its function is as follows. Involved in the gluconeogenesis. Catalyzes the conversion of oxaloacetate (OAA) to phosphoenolpyruvate (PEP) through direct phosphoryl transfer between the nucleoside triphosphate and OAA. The polypeptide is Phosphoenolpyruvate carboxykinase (ATP) (Aliivibrio salmonicida (strain LFI1238) (Vibrio salmonicida (strain LFI1238))).